We begin with the raw amino-acid sequence, 657 residues long: Threonine--tRNA ligase (657 aa).

Positions 1-61 (MINVTLPDGS…EGDASVAIIT (61 aa)) constitute a TGS domain. The tract at residues 244-549 (DHRKLGAQLD…LIENYAGSFP (306 aa)) is catalytic. 3 residues coordinate Zn(2+): Cys-349, His-400, and His-526.

The protein belongs to the class-II aminoacyl-tRNA synthetase family. As to quaternary structure, homodimer. Zn(2+) serves as cofactor.

It is found in the cytoplasm. The enzyme catalyses tRNA(Thr) + L-threonine + ATP = L-threonyl-tRNA(Thr) + AMP + diphosphate + H(+). Catalyzes the attachment of threonine to tRNA(Thr) in a two-step reaction: L-threonine is first activated by ATP to form Thr-AMP and then transferred to the acceptor end of tRNA(Thr). Also edits incorrectly charged L-seryl-tRNA(Thr). The chain is Threonine--tRNA ligase from Hyphomonas neptunium (strain ATCC 15444).